The chain runs to 118 residues: Group 1 truncated hemoglobin GlbN (118 aa).

H70 provides a ligand contact to heme.

It belongs to the truncated hemoglobin family. Group I subfamily. Monomer. The cofactor is heme.

The protein localises to the membrane. The chain is Group 1 truncated hemoglobin GlbN (glbN) from Nostoc commune.